Consider the following 519-residue polypeptide: Probable carboxypeptidase S-like 2 (519 aa).

A helical transmembrane segment spans residues 25 to 45 (FNLIKIIIRNLLIGILLMLVL). His-151 contacts Zn(2+). Asp-153 is a catalytic residue. Residue Asp-184 participates in Zn(2+) binding. Catalysis depends on Glu-218, which acts as the Proton acceptor. The Zn(2+) site is built by Glu-219, Asp-246, and His-490.

This sequence belongs to the peptidase M20A family. Zn(2+) is required as a cofactor.

Its subcellular location is the membrane. The sequence is that of Probable carboxypeptidase S-like 2 from Dictyostelium discoideum (Social amoeba).